Consider the following 75-residue polypeptide: Small ribosomal subunit protein bS18 (75 aa).

This sequence belongs to the bacterial ribosomal protein bS18 family. Part of the 30S ribosomal subunit. Forms a tight heterodimer with protein bS6.

In terms of biological role, binds as a heterodimer with protein bS6 to the central domain of the 16S rRNA, where it helps stabilize the platform of the 30S subunit. The protein is Small ribosomal subunit protein bS18 of Dinoroseobacter shibae (strain DSM 16493 / NCIMB 14021 / DFL 12).